Reading from the N-terminus, the 88-residue chain is Small ribosomal subunit protein bS20 (88 aa).

The span at 1-23 shows a compositional bias: basic and acidic residues; it reads MPNTKSAEKALRVADANRQENRR. A disordered region spans residues 1–29; it reads MPNTKSAEKALRVADANRQENRRAKSQVK.

The protein belongs to the bacterial ribosomal protein bS20 family.

In terms of biological role, binds directly to 16S ribosomal RNA. This Dehalococcoides mccartyi (strain ATCC BAA-2100 / JCM 16839 / KCTC 5957 / BAV1) protein is Small ribosomal subunit protein bS20.